Here is a 459-residue protein sequence, read N- to C-terminus: Chromosomal replication initiator protein DnaA (459 aa).

A domain I, interacts with DnaA modulators region spans residues 1–74 (MMEMPIDNLW…ANVVQSILGH (74 aa)). The interval 74 to 117 (HPVEIYITVAKGEEFEEIGGGGEWELPTTNIINETPNQNRQPNT) is domain II. Residues 118-334 (ELNAKYVFSR…GALTRALAYI (217 aa)) form a domain III, AAA+ region region. ATP-binding residues include glycine 162, glycine 164, lysine 165, and threonine 166. Positions 335-459 (SIWGLPMTVA…IKMNSRSRKP (125 aa)) are domain IV, binds dsDNA.

This sequence belongs to the DnaA family. As to quaternary structure, oligomerizes as a right-handed, spiral filament on DNA at oriC.

The protein resides in the cytoplasm. In terms of biological role, plays an essential role in the initiation and regulation of chromosomal replication. ATP-DnaA binds to the origin of replication (oriC) to initiate formation of the DNA replication initiation complex once per cell cycle. Binds the DnaA box (a 9 base pair repeat at the origin) and separates the double-stranded (ds)DNA. Forms a right-handed helical filament on oriC DNA; dsDNA binds to the exterior of the filament while single-stranded (ss)DNA is stabiized in the filament's interior. The ATP-DnaA-oriC complex binds and stabilizes one strand of the AT-rich DNA unwinding element (DUE), permitting loading of DNA polymerase. After initiation quickly degrades to an ADP-DnaA complex that is not apt for DNA replication. Binds acidic phospholipids. In Nostoc sp. (strain PCC 7120 / SAG 25.82 / UTEX 2576), this protein is Chromosomal replication initiator protein DnaA.